A 230-amino-acid polypeptide reads, in one-letter code: Demethylmenaquinone methyltransferase (230 aa).

S-adenosyl-L-methionine contacts are provided by residues threonine 62, aspartate 80, 100–101 (DA), and serine 117.

The protein belongs to the class I-like SAM-binding methyltransferase superfamily. MenG/UbiE family.

It catalyses the reaction a 2-demethylmenaquinol + S-adenosyl-L-methionine = a menaquinol + S-adenosyl-L-homocysteine + H(+). The protein operates within quinol/quinone metabolism; menaquinone biosynthesis; menaquinol from 1,4-dihydroxy-2-naphthoate: step 2/2. Methyltransferase required for the conversion of demethylmenaquinol (DMKH2) to menaquinol (MKH2). This is Demethylmenaquinone methyltransferase from Mycobacterium sp. (strain KMS).